The sequence spans 266 residues: UPF0294 protein YafD (266 aa).

The protein belongs to the UPF0294 family.

The protein localises to the cytoplasm. The sequence is that of UPF0294 protein YafD from Salmonella newport (strain SL254).